The following is a 306-amino-acid chain: Dirigent protein 24 (306 aa).

Residues 1 to 21 (MAKALSLTIFLFLLIASNVQS) form the signal peptide. The interval 36-61 (PQVPEEEDDSPQAVTTTPTPIPLPGP) is disordered.

It belongs to the plant dirigent protein family. Homodimer.

It localises to the secreted. It is found in the extracellular space. The protein localises to the apoplast. Its function is as follows. Dirigent proteins impart stereoselectivity on the phenoxy radical-coupling reaction, yielding optically active lignans from two molecules of coniferyl alcohol in the biosynthesis of lignans, flavonolignans, and alkaloids and thus plays a central role in plant secondary metabolism. The chain is Dirigent protein 24 (DIR24) from Arabidopsis thaliana (Mouse-ear cress).